A 429-amino-acid polypeptide reads, in one-letter code: CBL-interacting serine/threonine-protein kinase 7 (429 aa).

The region spanning 25-280 (YELGRRLGSG…IETVMKTNWF (256 aa)) is the Protein kinase domain. Residues 31 to 39 (LGSGSFAKV) and K54 each bind ATP. The active-site Proton acceptor is the D149. Residues 167–195 (DFGLSALPEHLQNGLLHTACGTPAYTAPE) form an activation loop region. S171 carries the post-translational modification Phosphoserine. T184 bears the Phosphothreonine mark. The 25-residue stretch at 302–326 (SSVNSITAFDLISLSSGLDLSGLFE) folds into the NAF domain. The segment at 330–363 (KKERRFTAKVSGVEVEEKAKMIGEKLGYVVKKKM) is PPI.

It belongs to the protein kinase superfamily. CAMK Ser/Thr protein kinase family. SNF1 subfamily. In terms of assembly, interacts with CBL1, CBL2 and CBL3. The cofactor is Mn(2+). Autophosphorylated. Strongly expressed in leaves, but barely expressed in roots, stems or flowers.

It catalyses the reaction L-seryl-[protein] + ATP = O-phospho-L-seryl-[protein] + ADP + H(+). It carries out the reaction L-threonyl-[protein] + ATP = O-phospho-L-threonyl-[protein] + ADP + H(+). CIPK serine-threonine protein kinases interact with CBL proteins. Binding of a CBL protein to the regulatory NAF domain of CIPK protein lead to the activation of the kinase in a calcium-dependent manner. Phosphorylates the rice sucrose synthase (SuSy) in vitro in an allosteric manner. Involved in cold response. In Arabidopsis thaliana (Mouse-ear cress), this protein is CBL-interacting serine/threonine-protein kinase 7 (CIPK7).